A 377-amino-acid polypeptide reads, in one-letter code: Homoserine O-acetyltransferase (377 aa).

Residues N48 to E347 enclose the AB hydrolase-1 domain. The Nucleophile role is filled by S143. R213 is a binding site for substrate. Active-site residues include D311 and H341. Residue D342 coordinates substrate.

It belongs to the AB hydrolase superfamily. MetX family. Homodimer.

The protein localises to the cytoplasm. It carries out the reaction L-homoserine + acetyl-CoA = O-acetyl-L-homoserine + CoA. The protein operates within amino-acid biosynthesis; L-methionine biosynthesis via de novo pathway; O-acetyl-L-homoserine from L-homoserine: step 1/1. In terms of biological role, transfers an acetyl group from acetyl-CoA to L-homoserine, forming acetyl-L-homoserine. The chain is Homoserine O-acetyltransferase from Corynebacterium efficiens (strain DSM 44549 / YS-314 / AJ 12310 / JCM 11189 / NBRC 100395).